Reading from the N-terminus, the 140-residue chain is Putative nickel-responsive regulator (140 aa).

Ni(2+) is bound by residues His-81, His-92, His-94, and Cys-100.

Belongs to the transcriptional regulatory CopG/NikR family. It depends on Ni(2+) as a cofactor.

Transcriptional regulator. The chain is Putative nickel-responsive regulator from Methanothrix thermoacetophila (strain DSM 6194 / JCM 14653 / NBRC 101360 / PT) (Methanosaeta thermophila).